Reading from the N-terminus, the 218-residue chain is Adenylate kinase (218 aa).

ATP is bound at residue 10–15; sequence GAGKGT. Residues 30–59 form an NMP region; that stretch reads STGDMLRAAVKAGSPLGLKVKEVMATGGLV. AMP is bound by residues Thr-31, Arg-36, 57-59, 85-88, and Gln-92; these read GLV and GFPR. The interval 122 to 159 is LID; sequence GRRVHEASGRVYHVDYNPPKVEGKDDVTGEPLVQREDD. ATP contacts are provided by residues Arg-123 and 132–133; that span reads VY. Residues Arg-156 and Arg-167 each coordinate AMP. Residue Gly-203 participates in ATP binding.

It belongs to the adenylate kinase family. In terms of assembly, monomer.

Its subcellular location is the cytoplasm. It catalyses the reaction AMP + ATP = 2 ADP. It functions in the pathway purine metabolism; AMP biosynthesis via salvage pathway; AMP from ADP: step 1/1. Functionally, catalyzes the reversible transfer of the terminal phosphate group between ATP and AMP. Plays an important role in cellular energy homeostasis and in adenine nucleotide metabolism. The protein is Adenylate kinase of Hahella chejuensis (strain KCTC 2396).